A 133-amino-acid chain; its full sequence is Profilin (133 aa).

It belongs to the profilin family. Occurs in many kinds of cells as a complex with monomeric actin in a 1:1 ratio.

Its subcellular location is the cytoplasm. The protein resides in the cytoskeleton. In terms of biological role, binds to actin and affects the structure of the cytoskeleton. At high concentrations, profilin prevents the polymerization of actin, whereas it enhances it at low concentrations. By binding to PIP2, it inhibits the formation of IP3 and DG. This is Profilin from Helianthus annuus (Common sunflower).